The following is a 356-amino-acid chain: Histidinol-phosphate aminotransferase (356 aa).

N6-(pyridoxal phosphate)lysine is present on Lys-214.

This sequence belongs to the class-II pyridoxal-phosphate-dependent aminotransferase family. Histidinol-phosphate aminotransferase subfamily. As to quaternary structure, homodimer. The cofactor is pyridoxal 5'-phosphate.

It carries out the reaction L-histidinol phosphate + 2-oxoglutarate = 3-(imidazol-4-yl)-2-oxopropyl phosphate + L-glutamate. It functions in the pathway amino-acid biosynthesis; L-histidine biosynthesis; L-histidine from 5-phospho-alpha-D-ribose 1-diphosphate: step 7/9. The sequence is that of Histidinol-phosphate aminotransferase (hisC) from Escherichia coli O157:H7.